We begin with the raw amino-acid sequence, 138 residues long: Large ribosomal subunit protein uL16 (138 aa).

Residues 1-17 are compositionally biased toward basic residues; the sequence is MLIPRKVKHRKQHHPRQ. A disordered region spans residues 1-22; it reads MLIPRKVKHRKQHHPRQRGIAS.

Belongs to the universal ribosomal protein uL16 family. In terms of assembly, part of the 50S ribosomal subunit.

Functionally, binds 23S rRNA and is also seen to make contacts with the A and possibly P site tRNAs. This chain is Large ribosomal subunit protein uL16, found in Mycobacterium tuberculosis (strain ATCC 25177 / H37Ra).